Consider the following 957-residue polypeptide: ERC protein 2 (957 aa).

Over residues 1–13 the composition is skewed to polar residues; that stretch reads MYGSARTITNLEG. The tract at residues 1 to 44 is disordered; that stretch reads MYGSARTITNLEGSPSRSPRLPRSPRLGHRRTSSGGGGGTGKTL. The span at 14–25 shows a compositional bias: low complexity; it reads SPSRSPRLPRSP. 2 positions are modified to phosphoserine: Ser65 and Ser666. Residues 140–917 adopt a coiled-coil conformation; sequence RQVRDSTMLD…RMKLMADNYD (778 aa). Residues 918–957 form a disordered region; that stretch reads DDHHHYHHHHHHHHHRSPGRSQHSNHRPSPDQDDEEGIWA. Over residues 922 to 943 the composition is skewed to basic residues; the sequence is HYHHHHHHHHHRSPGRSQHSNH. Residues 948 to 957 show a composition bias toward acidic residues; sequence DQDDEEGIWA.

In terms of assembly, interacts with BSN, ERC1, PPFIA1, PPFIA2, PPFIA3 and PPFIA4. Interacts through its C-terminus with the PDZ domain of RIMS1. Part of a complex consisting of ERC2, RIMS1 and UNC13A.

The protein localises to the cytoplasm. Its subcellular location is the synapse. It is found in the presynaptic active zone. The protein resides in the cytoskeleton. Its function is as follows. Thought to be involved in the organization of the cytomatrix at the nerve terminals active zone (CAZ) which regulates neurotransmitter release. Seems to act together with BSN. May recruit liprin-alpha proteins to the CAZ. The chain is ERC protein 2 (ERC2) from Homo sapiens (Human).